We begin with the raw amino-acid sequence, 586 residues long: Arginine--tRNA ligase (586 aa).

The 'HIGH' region signature appears at 133–143 (ANPTGPLNIVS).

The protein belongs to the class-I aminoacyl-tRNA synthetase family. Monomer.

The protein localises to the cytoplasm. The enzyme catalyses tRNA(Arg) + L-arginine + ATP = L-arginyl-tRNA(Arg) + AMP + diphosphate. This chain is Arginine--tRNA ligase, found in Leptospira borgpetersenii serovar Hardjo-bovis (strain JB197).